Here is a 255-residue protein sequence, read N- to C-terminus: DNA repair protein RecO (255 aa).

This sequence belongs to the RecO family.

Its function is as follows. Involved in DNA repair and RecF pathway recombination. This Acidithiobacillus ferrooxidans (strain ATCC 23270 / DSM 14882 / CIP 104768 / NCIMB 8455) (Ferrobacillus ferrooxidans (strain ATCC 23270)) protein is DNA repair protein RecO.